The chain runs to 239 residues: 2-C-methyl-D-erythritol 4-phosphate cytidylyltransferase (239 aa).

It belongs to the IspD/TarI cytidylyltransferase family. IspD subfamily.

The catalysed reaction is 2-C-methyl-D-erythritol 4-phosphate + CTP + H(+) = 4-CDP-2-C-methyl-D-erythritol + diphosphate. Its pathway is isoprenoid biosynthesis; isopentenyl diphosphate biosynthesis via DXP pathway; isopentenyl diphosphate from 1-deoxy-D-xylulose 5-phosphate: step 2/6. Its function is as follows. Catalyzes the formation of 4-diphosphocytidyl-2-C-methyl-D-erythritol from CTP and 2-C-methyl-D-erythritol 4-phosphate (MEP). The chain is 2-C-methyl-D-erythritol 4-phosphate cytidylyltransferase from Acinetobacter baylyi (strain ATCC 33305 / BD413 / ADP1).